A 243-amino-acid polypeptide reads, in one-letter code: Adenosylcobinamide-GDP ribazoletransferase (243 aa).

A run of 6 helical transmembrane segments spans residues 33 to 53, 59 to 79, 105 to 125, 127 to 147, 172 to 192, and 223 to 243; these read FLPVIGLLIGILMYLPTLLAP, IIIVSIWALYFLITGGLHIDG, IGAFGVLGILWLLILNLTLAY, TENMLLLLVPVVGRASAVFAA, VISIAFSLLLGSMVSIKGAII, and TIEISQTLFMLSAYLLKSIII.

Belongs to the CobS family. Requires Mg(2+) as cofactor.

It is found in the cell membrane. It catalyses the reaction alpha-ribazole + adenosylcob(III)inamide-GDP = adenosylcob(III)alamin + GMP + H(+). The catalysed reaction is alpha-ribazole 5'-phosphate + adenosylcob(III)inamide-GDP = adenosylcob(III)alamin 5'-phosphate + GMP + H(+). It functions in the pathway cofactor biosynthesis; adenosylcobalamin biosynthesis; adenosylcobalamin from cob(II)yrinate a,c-diamide: step 7/7. In terms of biological role, joins adenosylcobinamide-GDP and alpha-ribazole to generate adenosylcobalamin (Ado-cobalamin). Also synthesizes adenosylcobalamin 5'-phosphate from adenosylcobinamide-GDP and alpha-ribazole 5'-phosphate. The chain is Adenosylcobinamide-GDP ribazoletransferase from Alkaliphilus oremlandii (strain OhILAs) (Clostridium oremlandii (strain OhILAs)).